The chain runs to 269 residues: Ribonuclease HII (269 aa).

One can recognise an RNase H type-2 domain in the interval 83 to 269 (YLIAGVDEVG…HRMSFLTNIL (187 aa)). Residues aspartate 89, glutamate 90, and aspartate 185 each contribute to the a divalent metal cation site.

It belongs to the RNase HII family. It depends on Mn(2+) as a cofactor. The cofactor is Mg(2+).

Its subcellular location is the cytoplasm. It carries out the reaction Endonucleolytic cleavage to 5'-phosphomonoester.. Its function is as follows. Endonuclease that specifically degrades the RNA of RNA-DNA hybrids. In Clostridium botulinum (strain Loch Maree / Type A3), this protein is Ribonuclease HII.